A 347-amino-acid polypeptide reads, in one-letter code: Extracellular metalloprotease (347 aa).

The N-terminal stretch at Met1 to Ala20 is a signal peptide. Residues Ser43–Gln68 are disordered. His162 is a Zn(2+) binding site. Glu163 is an active-site residue. Zn(2+) is bound by residues His166 and Glu186. The active-site Proton donor is His264.

This sequence belongs to the peptidase M4 family. Ca(2+) serves as cofactor. Zn(2+) is required as a cofactor.

The protein localises to the secreted. In Pectobacterium carotovorum subsp. carotovorum (Erwinia carotovora subsp. carotovora), this protein is Extracellular metalloprotease (prt1).